Here is a 189-residue protein sequence, read N- to C-terminus: GTP cyclohydrolase 1 (189 aa).

The Zn(2+) site is built by C78, H81, and C150.

Belongs to the GTP cyclohydrolase I family. As to quaternary structure, homomer.

It carries out the reaction GTP + H2O = 7,8-dihydroneopterin 3'-triphosphate + formate + H(+). Its pathway is cofactor biosynthesis; 7,8-dihydroneopterin triphosphate biosynthesis; 7,8-dihydroneopterin triphosphate from GTP: step 1/1. The chain is GTP cyclohydrolase 1 from Lysinibacillus sphaericus (strain C3-41).